An 86-amino-acid polypeptide reads, in one-letter code: UPF0457 protein SSP0714 (86 aa).

Belongs to the UPF0457 family.

In Staphylococcus saprophyticus subsp. saprophyticus (strain ATCC 15305 / DSM 20229 / NCIMB 8711 / NCTC 7292 / S-41), this protein is UPF0457 protein SSP0714.